We begin with the raw amino-acid sequence, 453 residues long: UPF0210 protein Pcar_2119 (453 aa).

Belongs to the UPF0210 family. As to quaternary structure, homodimer.

In Syntrophotalea carbinolica (strain DSM 2380 / NBRC 103641 / GraBd1) (Pelobacter carbinolicus), this protein is UPF0210 protein Pcar_2119.